Reading from the N-terminus, the 485-residue chain is Aspartyl/glutamyl-tRNA(Asn/Gln) amidotransferase subunit B (485 aa).

This sequence belongs to the GatB/GatE family. GatB subfamily. As to quaternary structure, heterotrimer of A, B and C subunits.

The catalysed reaction is L-glutamyl-tRNA(Gln) + L-glutamine + ATP + H2O = L-glutaminyl-tRNA(Gln) + L-glutamate + ADP + phosphate + H(+). It carries out the reaction L-aspartyl-tRNA(Asn) + L-glutamine + ATP + H2O = L-asparaginyl-tRNA(Asn) + L-glutamate + ADP + phosphate + 2 H(+). Allows the formation of correctly charged Asn-tRNA(Asn) or Gln-tRNA(Gln) through the transamidation of misacylated Asp-tRNA(Asn) or Glu-tRNA(Gln) in organisms which lack either or both of asparaginyl-tRNA or glutaminyl-tRNA synthetases. The reaction takes place in the presence of glutamine and ATP through an activated phospho-Asp-tRNA(Asn) or phospho-Glu-tRNA(Gln). In Borrelia recurrentis (strain A1), this protein is Aspartyl/glutamyl-tRNA(Asn/Gln) amidotransferase subunit B.